The sequence spans 252 residues: Major prion protein (252 aa).

The signal sequence occupies residues 1–22 (MANLGCWMLFLFVATWSDLGLC). The segment at 23–38 (KKRPKPGGWNTGGSRY) is interaction with ADGRG6. The tract at residues 23–229 (KKRPKPGGWN…ESQAYYQRGS (207 aa)) is interaction with GRB2, ERI3 and SYN1. Positions 26 to 106 (PKPGGWNTGG…QWNKPSKPKT (81 aa)) are disordered. 5 consecutive repeat copies span residues 51–58 (PQGGGWGQ), 59–66 (PHGGGWGQ), 67–74 (PHGGGWGQ), 75–82 (PHGGGWGQ), and 83–90 (PHGGGWGQ). The 5 X 8 AA tandem repeats of P-H-G-G-G-W-G-Q stretch occupies residues 51–90 (PQGGGWGQPHGGGWGQPHGGGWGQPHGGGWGQPHGGGWGQ). Gly residues predominate over residues 52–94 (QGGGWGQPHGGGWGQPHGGGWGQPHGGGWGQPHGGGWGQGGGT). Positions 60, 61, 62, 68, 69, 70, 76, 77, 78, 84, 85, and 86 each coordinate Cu(2+). A disulfide bond links Cys178 and Cys213. 2 N-linked (GlcNAc...) asparagine glycosylation sites follow: Asn180 and Asn196. A lipid anchor (GPI-anchor amidated serine) is attached at Ser229. Positions 230–252 (SMVLFSSPPVILLISFLIFLIVG) are cleaved as a propeptide — removed in mature form.

This sequence belongs to the prion family. As to quaternary structure, monomer and homodimer. Has a tendency to aggregate into amyloid fibrils containing a cross-beta spine, formed by a steric zipper of superposed beta-strands. Soluble oligomers may represent an intermediate stage on the path to fibril formation. Copper binding may promote oligomerization. Interacts with GRB2, APP, ERI3/PRNPIP and SYN1. Mislocalized cytosolically exposed PrP interacts with MGRN1; this interaction alters MGRN1 subcellular location and causes lysosomal enlargement. Interacts with APP. Interacts with KIAA1191. Interacts with ADGRG6.

It localises to the cell membrane. The protein localises to the golgi apparatus. Its primary physiological function is unclear. May play a role in neuronal development and synaptic plasticity. May be required for neuronal myelin sheath maintenance. May promote myelin homeostasis through acting as an agonist for ADGRG6 receptor. May play a role in iron uptake and iron homeostasis. Soluble oligomers are toxic to cultured neuroblastoma cells and induce apoptosis (in vitro). Association with GPC1 (via its heparan sulfate chains) targets PRNP to lipid rafts. Also provides Cu(2+) or Zn(2+) for the ascorbate-mediated GPC1 deaminase degradation of its heparan sulfate side chains. In Callithrix jacchus (White-tufted-ear marmoset), this protein is Major prion protein (PRNP).